We begin with the raw amino-acid sequence, 421 residues long: Alpha-tubulin N-acetyltransferase 1 (421 aa).

Positions 1–190 constitute an N-acetyltransferase domain; sequence MEFPFDVDAL…NNFVIFEGFF (190 aa). Lys-56 is subject to N6-acetyllysine; by autocatalysis. Acetyl-CoA is bound at residue 124 to 137; sequence FYIHESVQRHGHGR. Lys-146 is modified (N6-acetyllysine; by autocatalysis). 160-169 provides a ligand contact to acetyl-CoA; that stretch reads SQKLLKFLNK. A disordered region spans residues 196–235; sequence PPAPSLRATRHSRAAAVDPTPAAPARKLPPKRAEGDIKPY. Positions 209–221 are enriched in low complexity; the sequence is AAAVDPTPAAPAR. Residues 226–235 show a composition bias toward basic and acidic residues; the sequence is KRAEGDIKPY. Residues Lys-233 and Lys-244 each carry the N6-acetyllysine; by autocatalysis modification. Positions 252 to 284 are disordered; the sequence is PLNRAPRRATPPAHPPPRSSSLGNSPERGPLRP. Ser-272 and Ser-276 each carry phosphoserine. Asymmetric dimethylarginine is present on Arg-305. Residues 306–402 are disordered; sequence LLLAADPGGS…PAQSWTVGGD (97 aa). Ser-315 is modified (phosphoserine). The residue at position 323 (Arg-323) is an Omega-N-methylarginine. Over residues 342–354 the composition is skewed to polar residues; sequence VNSSSPNTGNQDS. Basic and acidic residues predominate over residues 355 to 367; sequence KQGEQETKNRSAS.

Belongs to the acetyltransferase ATAT1 family. As to quaternary structure, component of the BBSome complex. Interacts with AP2 alpha-adaptins, including AP2A2, but not with AP1 gamma-adaptin (AP1G1/AP1G2); this interaction is required for efficient alpha-tubulin acetylation, hence clathrin-coated pits are sites of microtubule acetylation. In terms of processing, autoacetylation strongly increases tubulin acetylation.

Its subcellular location is the cytoplasm. The protein localises to the membrane. It localises to the clathrin-coated pit. The protein resides in the cell junction. It is found in the focal adhesion. Its subcellular location is the cell projection. The protein localises to the axon. It localises to the cytoskeleton. The protein resides in the spindle. The enzyme catalyses L-lysyl-[alpha-tubulin] + acetyl-CoA = N(6)-acetyl-L-lysyl-[alpha-tubulin] + CoA + H(+). In terms of biological role, specifically acetylates 'Lys-40' in alpha-tubulin on the lumenal side of microtubules. Promotes microtubule destabilization and accelerates microtubule dynamics; this activity may be independent of acetylation activity. Acetylates alpha-tubulin with a slow enzymatic rate, due to a catalytic site that is not optimized for acetyl transfer. Enters the microtubule through each end and diffuses quickly throughout the lumen of microtubules. Acetylates only long/old microtubules because of its slow acetylation rate since it does not have time to act on dynamically unstable microtubules before the enzyme is released. Required for normal sperm flagellar function. Promotes directional cell locomotion and chemotaxis, through AP2A2-dependent acetylation of alpha-tubulin at clathrin-coated pits that are concentrated at the leading edge of migrating cells. May facilitate primary cilium assembly. This chain is Alpha-tubulin N-acetyltransferase 1, found in Homo sapiens (Human).